The sequence spans 341 residues: Glyceraldehyde-3-phosphate dehydrogenase, cytosolic (341 aa).

NAD(+) contacts are provided by residues 14-15 (RI) and Asp-36. D-glyceraldehyde 3-phosphate-binding positions include 153-155 (SCT), Thr-184, 213-214 (TG), and Arg-236. Residue Cys-154 is the Nucleophile of the active site. NAD(+) is bound at residue Asn-318.

Belongs to the glyceraldehyde-3-phosphate dehydrogenase family. In terms of assembly, homotetramer.

It is found in the cytoplasm. It carries out the reaction D-glyceraldehyde 3-phosphate + phosphate + NAD(+) = (2R)-3-phospho-glyceroyl phosphate + NADH + H(+). Its pathway is carbohydrate degradation; glycolysis; pyruvate from D-glyceraldehyde 3-phosphate: step 1/5. In terms of biological role, key enzyme in glycolysis that catalyzes the first step of the pathway by converting D-glyceraldehyde 3-phosphate (G3P) into 3-phospho-D-glyceroyl phosphate. Essential for the maintenance of cellular ATP levels and carbohydrate metabolism. This is Glyceraldehyde-3-phosphate dehydrogenase, cytosolic (GAPC) from Chlamydomonas reinhardtii (Chlamydomonas smithii).